The sequence spans 272 residues: Bifunctional protein FolD 2 (272 aa).

Residues 157–159 (GRS), T182, and I223 each bind NADP(+).

Belongs to the tetrahydrofolate dehydrogenase/cyclohydrolase family. As to quaternary structure, homodimer.

The catalysed reaction is (6R)-5,10-methylene-5,6,7,8-tetrahydrofolate + NADP(+) = (6R)-5,10-methenyltetrahydrofolate + NADPH. It catalyses the reaction (6R)-5,10-methenyltetrahydrofolate + H2O = (6R)-10-formyltetrahydrofolate + H(+). The protein operates within one-carbon metabolism; tetrahydrofolate interconversion. Catalyzes the oxidation of 5,10-methylenetetrahydrofolate to 5,10-methenyltetrahydrofolate and then the hydrolysis of 5,10-methenyltetrahydrofolate to 10-formyltetrahydrofolate. The protein is Bifunctional protein FolD 2 of Syntrophomonas wolfei subsp. wolfei (strain DSM 2245B / Goettingen).